Reading from the N-terminus, the 216-residue chain is Ribosomal RNA small subunit methyltransferase G (216 aa).

Residues G73, L78, 124–125 (AE), and R139 each bind S-adenosyl-L-methionine.

The protein belongs to the methyltransferase superfamily. RNA methyltransferase RsmG family.

The protein resides in the cytoplasm. Its function is as follows. Specifically methylates the N7 position of guanine in position 518 of 16S rRNA. The polypeptide is Ribosomal RNA small subunit methyltransferase G (Pseudarthrobacter chlorophenolicus (strain ATCC 700700 / DSM 12829 / CIP 107037 / JCM 12360 / KCTC 9906 / NCIMB 13794 / A6) (Arthrobacter chlorophenolicus)).